The sequence spans 215 residues: MMYPHPIIAKEGWPYLALIGIVTLPVHYIGGIAWSWPLWIIFIFVLQFFRDPQRIPAMGRDLVLSPADGRIVVVEKTNDPYADREALKISVFMNVFNVHSNRSAVNGLVKEIQYFPGKFVNADLDKASTENERNAVVIDANGHIVTLVQVAGLIARRILCYIHVGDRLKAGERYGFIRFGSRVDVYLPLTAEPLVSVGDKVFATNTALARLPGLD.

The Schiff-base intermediate with substrate; via pyruvic acid role is filled by Ser-181. Ser-181 carries the post-translational modification Pyruvic acid (Ser); by autocatalysis.

The protein belongs to the phosphatidylserine decarboxylase family. PSD-A subfamily. In terms of assembly, heterodimer of a large membrane-associated beta subunit and a small pyruvoyl-containing alpha subunit. The cofactor is pyruvate. In terms of processing, is synthesized initially as an inactive proenzyme. Formation of the active enzyme involves a self-maturation process in which the active site pyruvoyl group is generated from an internal serine residue via an autocatalytic post-translational modification. Two non-identical subunits are generated from the proenzyme in this reaction, and the pyruvate is formed at the N-terminus of the alpha chain, which is derived from the carboxyl end of the proenzyme. The post-translation cleavage follows an unusual pathway, termed non-hydrolytic serinolysis, in which the side chain hydroxyl group of the serine supplies its oxygen atom to form the C-terminus of the beta chain, while the remainder of the serine residue undergoes an oxidative deamination to produce ammonia and the pyruvoyl prosthetic group on the alpha chain.

It localises to the cell membrane. The enzyme catalyses a 1,2-diacyl-sn-glycero-3-phospho-L-serine + H(+) = a 1,2-diacyl-sn-glycero-3-phosphoethanolamine + CO2. It participates in phospholipid metabolism; phosphatidylethanolamine biosynthesis; phosphatidylethanolamine from CDP-diacylglycerol: step 2/2. In terms of biological role, catalyzes the formation of phosphatidylethanolamine (PtdEtn) from phosphatidylserine (PtdSer). The protein is Phosphatidylserine decarboxylase proenzyme of Polynucleobacter asymbioticus (strain DSM 18221 / CIP 109841 / QLW-P1DMWA-1) (Polynucleobacter necessarius subsp. asymbioticus).